Here is a 433-residue protein sequence, read N- to C-terminus: GTPase Obg (433 aa).

An Obg domain is found at 1–159 (MAFRDVLDIE…RRVRLELRLI (159 aa)). Residues 160–327 (ADVGLVGYPN…LRQALFDLLP (168 aa)) enclose the OBG-type G domain. Residues 166–173 (GYPNAGKS), 191–195 (FTTLS), 214–217 (DIPG), 280–283 (NKIE), and 308–310 (SAK) contribute to the ATP site. Residues serine 173 and threonine 193 each contribute to the Mg(2+) site. The OCT domain maps to 342–430 (PEEVREEPLT…IGSFRFEYYA (89 aa)).

Belongs to the TRAFAC class OBG-HflX-like GTPase superfamily. OBG GTPase family. As to quaternary structure, monomer. Requires Mg(2+) as cofactor.

The protein resides in the cytoplasm. An essential GTPase which binds GTP, GDP and possibly (p)ppGpp with moderate affinity, with high nucleotide exchange rates and a fairly low GTP hydrolysis rate. Plays a role in control of the cell cycle, stress response, ribosome biogenesis and in those bacteria that undergo differentiation, in morphogenesis control. In Deinococcus geothermalis (strain DSM 11300 / CIP 105573 / AG-3a), this protein is GTPase Obg.